We begin with the raw amino-acid sequence, 105 residues long: UPF0122 protein OB1530 (105 aa).

The protein belongs to the UPF0122 family.

Functionally, might take part in the signal recognition particle (SRP) pathway. This is inferred from the conservation of its genetic proximity to ftsY/ffh. May be a regulatory protein. This is UPF0122 protein OB1530 from Oceanobacillus iheyensis (strain DSM 14371 / CIP 107618 / JCM 11309 / KCTC 3954 / HTE831).